Here is a 352-residue protein sequence, read N- to C-terminus: N-acetyl-gamma-glutamyl-phosphate reductase (352 aa).

Residue Cys158 is part of the active site.

The protein belongs to the NAGSA dehydrogenase family. Type 1 subfamily.

The protein localises to the cytoplasm. The catalysed reaction is N-acetyl-L-glutamate 5-semialdehyde + phosphate + NADP(+) = N-acetyl-L-glutamyl 5-phosphate + NADPH + H(+). It participates in amino-acid biosynthesis; L-arginine biosynthesis; N(2)-acetyl-L-ornithine from L-glutamate: step 3/4. Its function is as follows. Catalyzes the NADPH-dependent reduction of N-acetyl-5-glutamyl phosphate to yield N-acetyl-L-glutamate 5-semialdehyde. The polypeptide is N-acetyl-gamma-glutamyl-phosphate reductase (Mycobacterium bovis (strain BCG / Tokyo 172 / ATCC 35737 / TMC 1019)).